The primary structure comprises 149 residues: Deoxyuridine 5'-triphosphate nucleotidohydrolase (149 aa).

Residues 68–70 (RSG), asparagine 81, 85–87 (LID), and methionine 95 contribute to the substrate site.

The protein belongs to the dUTPase family. Requires Mg(2+) as cofactor.

The catalysed reaction is dUTP + H2O = dUMP + diphosphate + H(+). Its pathway is pyrimidine metabolism; dUMP biosynthesis; dUMP from dCTP (dUTP route): step 2/2. Functionally, this enzyme is involved in nucleotide metabolism: it produces dUMP, the immediate precursor of thymidine nucleotides and it decreases the intracellular concentration of dUTP so that uracil cannot be incorporated into DNA. The polypeptide is Deoxyuridine 5'-triphosphate nucleotidohydrolase (Janthinobacterium sp. (strain Marseille) (Minibacterium massiliensis)).